The following is a 231-amino-acid chain: Somatolactin-2 (231 aa).

A signal peptide spans 1–24 (MRMMRAIKQGQWAILLWPYLLTTS). 3 cysteine pairs are disulfide-bonded: cysteine 29–cysteine 39, cysteine 89–cysteine 205, and cysteine 222–cysteine 230. Residue asparagine 145 is glycosylated (N-linked (GlcNAc...) asparagine).

This sequence belongs to the somatotropin/prolactin family. Pituitary gland.

The protein resides in the secreted. The chain is Somatolactin-2 from Sparus aurata (Gilthead sea bream).